We begin with the raw amino-acid sequence, 275 residues long: 3-methyl-2-oxobutanoate hydroxymethyltransferase (275 aa).

Mg(2+)-binding residues include aspartate 44 and aspartate 83. Residues 44-45 (DS), aspartate 83, and lysine 113 contribute to the 3-methyl-2-oxobutanoate site. Residue glutamate 115 participates in Mg(2+) binding. Glutamate 182 functions as the Proton acceptor in the catalytic mechanism.

The protein belongs to the PanB family. In terms of assembly, homodecamer; pentamer of dimers. Mg(2+) is required as a cofactor.

The protein localises to the cytoplasm. The enzyme catalyses 3-methyl-2-oxobutanoate + (6R)-5,10-methylene-5,6,7,8-tetrahydrofolate + H2O = 2-dehydropantoate + (6S)-5,6,7,8-tetrahydrofolate. The protein operates within cofactor biosynthesis; (R)-pantothenate biosynthesis; (R)-pantoate from 3-methyl-2-oxobutanoate: step 1/2. In terms of biological role, catalyzes the reversible reaction in which hydroxymethyl group from 5,10-methylenetetrahydrofolate is transferred onto alpha-ketoisovalerate to form ketopantoate. This chain is 3-methyl-2-oxobutanoate hydroxymethyltransferase, found in Enterococcus faecalis (strain ATCC 700802 / V583).